The chain runs to 441 residues: uncharacterized protein (441 aa).

Belongs to the outer membrane factor (OMF) (TC 1.B.17) family.

This is an uncharacterized protein from Haemophilus influenzae (strain ATCC 51907 / DSM 11121 / KW20 / Rd).